Consider the following 750-residue polypeptide: Polyribonucleotide nucleotidyltransferase (750 aa).

Residues aspartate 492 and aspartate 498 each coordinate Mg(2+). The 60-residue stretch at 559 to 618 (PQLSVVEVNPEIIRVIIGPGGKNIKAITSATGASIDIEDSGRISIFAPTKESMDMAREMV) folds into the KH domain. Residues 628–695 (GKNYTAKVRK…NDGRVRASRK (68 aa)) form the S1 motif domain. The interval 705–750 (EWDPADTARPPRKPRDRDDRGDRGGRGDRGDRGGRNGRGGDRRDRR) is disordered. Residues 717-750 (KPRDRDDRGDRGGRGDRGDRGGRNGRGGDRRDRR) show a composition bias toward basic and acidic residues.

It belongs to the polyribonucleotide nucleotidyltransferase family. The cofactor is Mg(2+).

The protein resides in the cytoplasm. The catalysed reaction is RNA(n+1) + phosphate = RNA(n) + a ribonucleoside 5'-diphosphate. Involved in mRNA degradation. Catalyzes the phosphorolysis of single-stranded polyribonucleotides processively in the 3'- to 5'-direction. The chain is Polyribonucleotide nucleotidyltransferase from Oleidesulfovibrio alaskensis (strain ATCC BAA-1058 / DSM 17464 / G20) (Desulfovibrio alaskensis).